The following is a 348-amino-acid chain: Trans-L-3-hydroxyproline dehydratase (348 aa).

Cysteine 101 functions as the Proton acceptor in the catalytic mechanism. Substrate contacts are provided by residues 102 to 103 (GH), aspartate 263, and 268 to 269 (GS).

The protein belongs to the proline racemase family. Homodimer.

It carries out the reaction trans-3-hydroxy-L-proline = 1-pyrroline-2-carboxylate + H2O. Catalyzes the dehydration of trans-3-hydroxy-L-proline to delta-1-pyrroline-2-carboxylate (Pyr2C). The sequence is that of Trans-L-3-hydroxyproline dehydratase (l3hypdh) from Xenopus tropicalis (Western clawed frog).